The chain runs to 457 residues: Bifunctional F420 biosynthesis protein FbiB (457 aa).

The interval 1-253 is coenzyme F420:L-glutamate ligase; the sequence is MTSSDSHRSA…NGPDDLFWLG (253 aa). GTP-binding positions include 29-32, serine 59, and lysine 64; that span reads LPEF. A divalent metal cation is bound at residue aspartate 118. GTP is bound at residue asparagine 121. 2 residues coordinate a divalent metal cation: aspartate 159 and threonine 160. The segment at 254 to 457 is dehydro-coenzyme F420-0 reductase; the sequence is TTEALELGRQ…VRVADLLLRK (204 aa). FMN-binding positions include 269 to 273 and alanine 297; that span reads RRSVR. Aspartate 329 provides a ligand contact to coenzyme F420-(gamma-Glu)n. Residues glycine 408 and arginine 445 each coordinate FMN.

The protein in the N-terminal section; belongs to the CofE family. Requires Mg(2+) as cofactor. Mn(2+) serves as cofactor. K(+) is required as a cofactor.

The enzyme catalyses oxidized coenzyme F420-0 + GTP + L-glutamate = oxidized coenzyme F420-1 + GDP + phosphate + H(+). It carries out the reaction oxidized coenzyme F420-1 + GTP + L-glutamate = oxidized coenzyme F420-2 + GDP + phosphate + H(+). The catalysed reaction is oxidized coenzyme F420-(gamma-L-Glu)(n) + GTP + L-glutamate = oxidized coenzyme F420-(gamma-L-Glu)(n+1) + GDP + phosphate + H(+). It catalyses the reaction oxidized coenzyme F420-0 + FMN + H(+) = dehydro coenzyme F420-0 + FMNH2. It participates in cofactor biosynthesis; coenzyme F420 biosynthesis. Its function is as follows. Bifunctional enzyme that catalyzes the GTP-dependent successive addition of multiple gamma-linked L-glutamates to the L-lactyl phosphodiester of 7,8-didemethyl-8-hydroxy-5-deazariboflavin (F420-0) to form polyglutamated F420 derivatives, and the FMNH2-dependent reduction of dehydro-F420-0 to form F420-0. This Mycobacterium leprae (strain TN) protein is Bifunctional F420 biosynthesis protein FbiB.